Reading from the N-terminus, the 115-residue chain is NADH-ubiquinone oxidoreductase chain 3 (115 aa).

The next 3 membrane-spanning stretches (helical) occupy residues 4 to 24 (LMIL…AFWL), 55 to 75 (FFLV…LLPL), and 84 to 104 (INMM…GLAY).

It belongs to the complex I subunit 3 family. Core subunit of respiratory chain NADH dehydrogenase (Complex I) which is composed of 45 different subunits. Interacts with TMEM186. Interacts with TMEM242.

The protein resides in the mitochondrion inner membrane. The enzyme catalyses a ubiquinone + NADH + 5 H(+)(in) = a ubiquinol + NAD(+) + 4 H(+)(out). Its function is as follows. Core subunit of the mitochondrial membrane respiratory chain NADH dehydrogenase (Complex I) which catalyzes electron transfer from NADH through the respiratory chain, using ubiquinone as an electron acceptor. Essential for the catalytic activity of complex I. This chain is NADH-ubiquinone oxidoreductase chain 3, found in Podomys floridanus (Florida mouse).